The primary structure comprises 747 residues: Oxysterol-binding protein-related protein 11 (747 aa).

Met1 bears the N-acetylmethionine mark. The interval 1–50 is disordered; that stretch reads MQGGEPVSTMKVSESEGKLEGQATAVTPNKNSSCGGGISSSSSSRGGSAK. Phosphoserine is present on Ser15. At Thr27 the chain carries Phosphothreonine. The 98-residue stretch at 58–155 folds into the PH domain; it reads MENVYGYLMK…WVSRLQICTQ (98 aa). Phosphotyrosine is present on Tyr62. A disordered region spans residues 158-188; sequence TEAIGKNNPPLKSRSFSLASSSNSPISQRRP. The span at 170–184 shows a compositional bias: low complexity; sequence SRSFSLASSSNSPIS. Ser172, Ser174, Ser177, Ser181, Ser184, and Ser189 each carry phosphoserine. Residues 689–713 are compositionally biased toward basic and acidic residues; the sequence is EIDKATEHKHTLEERQRTEERHRTE. Residues 689–714 are disordered; sequence EIDKATEHKHTLEERQRTEERHRTET.

Belongs to the OSBP family. As to quaternary structure, heterodimer with OSBPL9. Present at highest levels in ovary, testis, kidney, liver, stomach, brain, and adipose tissue. Strong expression (at protein level) in epithelial cells of kidney tubules, testicular tubules, caecum, and skin. Present at low levels in subcutaneous and visceral adipose tissue (at protein level).

Its subcellular location is the late endosome membrane. It localises to the golgi apparatus. It is found in the trans-Golgi network membrane. The catalysed reaction is a 1,2-diacyl-sn-glycero-3-phospho-(1D-myo-inositol 4-phosphate)(out) + a 1,2-diacyl-sn-glycero-3-phospho-L-serine(in) = a 1,2-diacyl-sn-glycero-3-phospho-(1D-myo-inositol 4-phosphate)(in) + a 1,2-diacyl-sn-glycero-3-phospho-L-serine(out). In terms of biological role, plays a role in regulating ADIPOQ and FABP4 levels in differentiating adipocytes and is also involved in regulation of adipocyte triglyceride storage. Weakly binds 25-hydroxycholesterol. Interacts with OSBPL9 to function as lipid transfer proteins. Together they form a heterodimer that localizes at the ER-trans-Golgi membrane contact sites, and exchanges phosphatidylserine (1,2-diacyl-sn-glycero-3-phospho-L-serine, PS) for phosphatidylinositol-4-phosphate (1,2-diacyl-sn-glycero-3-phospho-(1D-myo-inositol 4-phosphate), PI(4)P) between the two organelles, a step that is critical for sphingomyelin synthesis in the Golgi complex. This Homo sapiens (Human) protein is Oxysterol-binding protein-related protein 11 (OSBPL11).